The sequence spans 118 residues: Large ribosomal subunit protein bL20c (118 aa).

Belongs to the bacterial ribosomal protein bL20 family.

It localises to the plastid. In terms of biological role, binds directly to 23S ribosomal RNA and is necessary for the in vitro assembly process of the 50S ribosomal subunit. It is not involved in the protein synthesizing functions of that subunit. This is Large ribosomal subunit protein bL20c from Aneura mirabilis (Parasitic liverwort).